Consider the following 698-residue polypeptide: Protein CRAC (698 aa).

One can recognise a PH domain in the interval 22–122 (DVSYSSIMKK…FLTLLIARIR (101 aa)). Positions 594-630 (TGGGSVPSSQSTNNLQSSTSSMSSLSSSSTSTTKRSH) are disordered. Residues 601–626 (SSQSTNNLQSSTSSMSSLSSSSTSTT) are compositionally biased toward low complexity.

The protein localises to the cytoplasm. Functionally, couples activated G protein to adenylyl cyclase signal transduction from surface cAMP receptor. Pianissimo a cytosolic regulator and CRAC, are both essential for activation of the enzyme adenylyl cyclase. Pianissimo and CRAC do not function redundantly. Both proteins are integral components of the adenylyl cyclase activation pathway. The chain is Protein CRAC (dagA) from Dictyostelium discoideum (Social amoeba).